Reading from the N-terminus, the 161-residue chain is UPF0178 protein PXO_00400 (161 aa).

It belongs to the UPF0178 family.

This Xanthomonas oryzae pv. oryzae (strain PXO99A) protein is UPF0178 protein PXO_00400.